The primary structure comprises 1402 residues: MLRYLLKTLLQMNLFADSLARDISNSSELLFGFNSSLAALNPSLLPPGDPSLNGSRVGPEDAMPRIVEQPPDLVVSRGEPATLPCRAEGRPRPNIEWYKNGARVATAREDPRAHRLLLPSGALFFPRIVHGRRSRPDEGVYTCVARNYLGAAASRNASLEVAVLRDDFRQSPGNVVVAVGEPAVMECVPPKGHPEPLVTWKKGKIKLKEEEGRITIRGGKLMMSHTFKSDAGMYMCVASNMAGERESGAAELVVLERPSFLRRPINQVVLADAPVNFLCEVQGDPQPNLHWRKDDGELPAGRYEIRSDHSLWIDQVSSEDEGTYTCVAENSVGRAEASGSLSVHVPPQFVTKPQNQTVAPGANVSFQCETKGNPPPAIFWQKEGSQVLLFPSQSLQPMGRLLVSPRGQLNITEVKIGDGGYYVCQAVSVAGSILAKALLEIKGASIDGLPPIILQGPANQTLVLGSSVWLPCRVIGNPQPNIQWKKDERWLQGDDSQFNLMDNGTLHIASIQEMDMGFYSCVAKSSIGEATWNSWLRKQEDWGASPGPATGPSNPPGPPSQPIVTEVTANSITLTWKPNPQSGATATSYVIEAFSQAAGNTWRTVADGVQLETYTISGLQPNTIYLFLVRAVGAWGLSEPSPVSEPVQTQDSSLSRPAEDPWKGQRGLAEVAVRMQEPTVLGPRTLQVSWTVDGPVQLVQGFRVSWRIAGLDQGSWTMLDLQSPHKQSTVLRGLPPGAQIQIKVQVQGQEGLGAESPFVTRSIPEEAPSGPPQGVAVALGGDRNSSVTVSWEPPLPSQRNGVITEYQIWCLGNESRFHLNRSAAGWARSVTFSGLLPGQIYRALVAAATSAGVGVASAPVLVQLPFPPAAEPGPEVSEGLAERLAKVLRKPAFLAGSSAACGALLLGFCAALYRRQKQRKELSHYTASFAYTPAVSFPHSEGLSGSSSRPPMGLGPAAYPWLADSWPHPPRSPSAQEPRGSCCPSNPDPDDRYYNEAGISLYLAQTARGANASGEGPVYSTIDPVGEELQTFHGGFPQHSSGDPSTWSQYAPPEWSEGDSGARGGQGKLLGKPVQMPSLSWPEALPPPPPSCELSCPEGPEEELKGSSDLEEWCPPVPEKSHLVGSSSSGACMVAPAPRDTPSPTSSYGQQSTATLTPSPPDPPQPPTDIPHLHQMPRRVPLGPSSPLSVSQPALSSHDGRPVGLGAGPVLSYHASPSPVPSTASSAPGRTRQVTGEMTPPLHGHRARIRKKPKALPYRREHSPGDLPPPPLPPPEEETSWPLGLRAAGSMSSLERERSGERRVVQAVPLGAQPLGAQRGPHPDAALLGCAAEEAWLPYGRPSFLSHGQGTSTCSTAGSNSSRGSNSSRGSRGSRGPGRSRSRSRSQSQSQRPGRNRREEPR.

Positions 1-20 (MLRYLLKTLLQMNLFADSLA) are cleaved as a signal peptide. Topologically, residues 21–891 (RDISNSSELL…ERLAKVLRKP (871 aa)) are extracellular. N-linked (GlcNAc...) asparagine glycans are attached at residues Asn-25, Asn-34, and Asn-53. 5 Ig-like C2-type domains span residues 64–160 (PRIV…ASLE), 166–253 (DDFR…AELV), 258–342 (PSFL…GSLS), 347–440 (PQFV…ALLE), and 450–531 (PPII…GEAT). Cysteines 85 and 143 form a disulfide. Asn-156 carries N-linked (GlcNAc...) asparagine glycosylation. 2 disulfide bridges follow: Cys-187/Cys-236 and Cys-279/Cys-326. Residues Asn-355, Asn-363, Asn-410, Asn-459, and Asn-503 are each glycosylated (N-linked (GlcNAc...) asparagine). A disulfide bridge links Cys-368 with Cys-424. Cysteines 472 and 521 form a disulfide. 2 disordered regions span residues 540–561 (EDWG…PPSQ) and 639–662 (EPSP…EDPW). Residues 543–552 (GASPGPATGP) are compositionally biased toward low complexity. Fibronectin type-III domains lie at 558–652 (PPSQ…TQDS), 672–766 (AVRM…IPEE), and 771–869 (PPQG…FPPA). Polar residues predominate over residues 646–655 (PVQTQDSSLS). N-linked (GlcNAc...) asparagine glycans are attached at residues Asn-784, Asn-813, and Asn-820. Residues 892 to 912 (AFLAGSSAACGALLLGFCAAL) form a helical membrane-spanning segment. Topologically, residues 913–1402 (YRRQKQRKEL…PGRNRREEPR (490 aa)) are cytoplasmic. Disordered regions lie at residues 965-989 (SWPH…NPDP), 1032-1307 (FHGG…VVQA), and 1340-1402 (GRPS…EEPR). Composition is skewed to polar residues over residues 1038 to 1049 (QHSSGDPSTWSQ) and 1142 to 1152 (PSPTSSYGQQS). The segment covering 1158 to 1169 (PSPPDPPQPPTD) has biased composition (pro residues). Low complexity-rich tracts occupy residues 1178 to 1191 (RRVP…LSVS) and 1215 to 1228 (ASPS…SSAP). Residues 1243 to 1254 (HGHRARIRKKPK) are compositionally biased toward basic residues. Ser-1263 is subject to Phosphoserine. The segment covering 1294 to 1304 (LERERSGERRV) has biased composition (basic and acidic residues). The segment covering 1346 to 1357 (SHGQGTSTCSTA) has biased composition (polar residues). Low complexity predominate over residues 1358–1371 (GSNSSRGSNSSRGS).

The protein belongs to the immunoglobulin superfamily. ROBO family. Interacts (via Fibronectin type-III 1 domain) with NELL2 (via the EGF domains) with a 3:3 stoichiometry; this interaction promotes oligomerization of ROBO3 resulting in the repulsion of commissural axons in the midline. As to expression, detected in embryonal spinal cord and hindbrain.

The protein resides in the membrane. Receptor involved in axon guidance during development. Acts as a multifunctional regulator of pathfinding that simultaneously mediates NELL2 repulsion, inhibits SLIT repulsion, and facilitates Netrin-1/NTN1 attraction. In spinal cord development plays a role in guiding commissural axons probably by preventing premature sensitivity to Slit proteins thus inhibiting Slit signaling through ROBO1/ROBO2. Binding OF NELL2 to the receptor ROBO3 promotes oligomerization of ROBO3, resulting in the repulsion of commissural axons in the midline. ROBO3 also indirectly boosts axon attraction to NTN1 without interacting with NTN1 itself. In terms of biological role, mediates NELL2 premature repulsion of commissural axons during midline crossing. Functionally, after midline crossing by the commissural axons, may, in concert with ROBO1 and ROBO2, prevent midline recrossing. Does not mediate NELL2 signaling. The polypeptide is Roundabout homolog 3 (Mus musculus (Mouse)).